The sequence spans 464 residues: Soluble pyridine nucleotide transhydrogenase (464 aa).

Residue 35 to 44 (DNRPLVGGNC) participates in FAD binding.

The protein belongs to the class-I pyridine nucleotide-disulfide oxidoreductase family. Requires FAD as cofactor.

The protein resides in the cytoplasm. It catalyses the reaction NAD(+) + NADPH = NADH + NADP(+). Functionally, conversion of NADPH, generated by peripheral catabolic pathways, to NADH, which can enter the respiratory chain for energy generation. The sequence is that of Soluble pyridine nucleotide transhydrogenase from Stutzerimonas stutzeri (strain A1501) (Pseudomonas stutzeri).